Consider the following 57-residue polypeptide: Large ribosomal subunit protein bL32 (57 aa).

Belongs to the bacterial ribosomal protein bL32 family.

In Shouchella clausii (strain KSM-K16) (Alkalihalobacillus clausii), this protein is Large ribosomal subunit protein bL32.